We begin with the raw amino-acid sequence, 88 residues long: Elongation factor 1-beta (88 aa).

This sequence belongs to the EF-1-beta/EF-1-delta family.

Functionally, promotes the exchange of GDP for GTP in EF-1-alpha/GDP, thus allowing the regeneration of EF-1-alpha/GTP that could then be used to form the ternary complex EF-1-alpha/GTP/AAtRNA. The protein is Elongation factor 1-beta (ef1b) of Thermoplasma acidophilum (strain ATCC 25905 / DSM 1728 / JCM 9062 / NBRC 15155 / AMRC-C165).